The chain runs to 156 residues: Ribosome maturation factor RimP (156 aa).

This sequence belongs to the RimP family.

The protein resides in the cytoplasm. Required for maturation of 30S ribosomal subunits. The protein is Ribosome maturation factor RimP of Anoxybacillus flavithermus (strain DSM 21510 / WK1).